A 165-amino-acid chain; its full sequence is Small ribosomal subunit protein uS5 (165 aa).

Residues 13 to 76 (LEEKVLVVNR…EAARKNLITI (64 aa)) enclose the S5 DRBM domain.

The protein belongs to the universal ribosomal protein uS5 family. In terms of assembly, part of the 30S ribosomal subunit. Contacts proteins S4 and S8.

Functionally, with S4 and S12 plays an important role in translational accuracy. In terms of biological role, located at the back of the 30S subunit body where it stabilizes the conformation of the head with respect to the body. In Chlamydia felis (strain Fe/C-56) (Chlamydophila felis), this protein is Small ribosomal subunit protein uS5.